A 153-amino-acid chain; its full sequence is Small ribosomal subunit protein uS15 (153 aa).

It belongs to the universal ribosomal protein uS15 family. Part of the 30S ribosomal subunit.

The polypeptide is Small ribosomal subunit protein uS15 (Sulfolobus acidocaldarius (strain ATCC 33909 / DSM 639 / JCM 8929 / NBRC 15157 / NCIMB 11770)).